The following is a 92-amino-acid chain: DNA-directed RNA polymerase subunit Rpo11 (92 aa).

It belongs to the archaeal Rpo11/eukaryotic RPB11/RPC19 RNA polymerase subunit family. In terms of assembly, part of the 13-subunit RNA polymerase complex.

It localises to the cytoplasm. The catalysed reaction is RNA(n) + a ribonucleoside 5'-triphosphate = RNA(n+1) + diphosphate. DNA-dependent RNA polymerase (RNAP) catalyzes the transcription of DNA into RNA using the four ribonucleoside triphosphates as substrates. In Saccharolobus shibatae (strain ATCC 51178 / DSM 5389 / JCM 8931 / NBRC 15437 / B12) (Sulfolobus shibatae), this protein is DNA-directed RNA polymerase subunit Rpo11.